Consider the following 261-residue polypeptide: Cytochrome c oxidase subunit 3 (261 aa).

The Mitochondrial matrix portion of the chain corresponds to 1-15; it reads MTHQTHAYHMVNPSP. Residues 16–34 form a helical membrane-spanning segment; it reads WPLTGALSALLMTSGLAMW. Residues 35–40 lie on the Mitochondrial intermembrane side of the membrane; the sequence is FHFNST. A helical transmembrane segment spans residues 41 to 66; sequence LLLAMGLLTNILTMYQWWRDIIREST. At 67-72 the chain is on the mitochondrial matrix side; sequence FQGHHT. Residues 73–105 traverse the membrane as a helical segment; the sequence is SIVQKGLRYGMILFIISEVFFFSGFFWAFYHSS. Topologically, residues 106-128 are mitochondrial intermembrane; that stretch reads LAPTPELGGCWPPTGIHPLNPLE. Residues 129–152 form a helical membrane-spanning segment; the sequence is VPLLNTSVLLASGVSITWAHHSLM. Residues 153 to 155 lie on the Mitochondrial matrix side of the membrane; it reads EGN. Residues 156 to 183 form a helical membrane-spanning segment; that stretch reads RKNMLQGLFITISLGVYFTLLQASEYYE. At 184–190 the chain is on the mitochondrial intermembrane side; the sequence is ASFTISD. A helical membrane pass occupies residues 191 to 223; the sequence is GVYGSTFFVATGFHGLHVIIGSTFLIVCFLRQL. The Mitochondrial matrix segment spans residues 224–232; sequence KFHFTSSHH. Residues 233 to 256 form a helical membrane-spanning segment; that stretch reads FGFEAAAWYWHFVDVVWLFLYVSI. Topologically, residues 257-261 are mitochondrial intermembrane; the sequence is YWWGS.

This sequence belongs to the cytochrome c oxidase subunit 3 family. As to quaternary structure, component of the cytochrome c oxidase (complex IV, CIV), a multisubunit enzyme composed of 14 subunits. The complex is composed of a catalytic core of 3 subunits MT-CO1, MT-CO2 and MT-CO3, encoded in the mitochondrial DNA, and 11 supernumerary subunits COX4I, COX5A, COX5B, COX6A, COX6B, COX6C, COX7A, COX7B, COX7C, COX8 and NDUFA4, which are encoded in the nuclear genome. The complex exists as a monomer or a dimer and forms supercomplexes (SCs) in the inner mitochondrial membrane with NADH-ubiquinone oxidoreductase (complex I, CI) and ubiquinol-cytochrome c oxidoreductase (cytochrome b-c1 complex, complex III, CIII), resulting in different assemblies (supercomplex SCI(1)III(2)IV(1) and megacomplex MCI(2)III(2)IV(2)).

The protein localises to the mitochondrion inner membrane. The enzyme catalyses 4 Fe(II)-[cytochrome c] + O2 + 8 H(+)(in) = 4 Fe(III)-[cytochrome c] + 2 H2O + 4 H(+)(out). Functionally, component of the cytochrome c oxidase, the last enzyme in the mitochondrial electron transport chain which drives oxidative phosphorylation. The respiratory chain contains 3 multisubunit complexes succinate dehydrogenase (complex II, CII), ubiquinol-cytochrome c oxidoreductase (cytochrome b-c1 complex, complex III, CIII) and cytochrome c oxidase (complex IV, CIV), that cooperate to transfer electrons derived from NADH and succinate to molecular oxygen, creating an electrochemical gradient over the inner membrane that drives transmembrane transport and the ATP synthase. Cytochrome c oxidase is the component of the respiratory chain that catalyzes the reduction of oxygen to water. Electrons originating from reduced cytochrome c in the intermembrane space (IMS) are transferred via the dinuclear copper A center (CU(A)) of subunit 2 and heme A of subunit 1 to the active site in subunit 1, a binuclear center (BNC) formed by heme A3 and copper B (CU(B)). The BNC reduces molecular oxygen to 2 water molecules using 4 electrons from cytochrome c in the IMS and 4 protons from the mitochondrial matrix. The protein is Cytochrome c oxidase subunit 3 (MT-CO3) of Equus caballus (Horse).